We begin with the raw amino-acid sequence, 259 residues long: Adenylosuccinate synthetase (259 aa).

GTP is bound by residues 3–9 and 31–33; these read GDEGKGK and GHT. Asp4 serves as the catalytic Proton acceptor. Mg(2+) contacts are provided by Asp4 and Gly31. Residue 4 to 7 participates in IMP binding; sequence DEGK. His32 (proton donor) is an active-site residue. Residues Thr120, Arg134, Gln215, and Thr230 each contribute to the IMP site.

The protein belongs to the adenylosuccinate synthetase family. In terms of assembly, homodimer. Mg(2+) is required as a cofactor.

Its subcellular location is the cytoplasm. It catalyses the reaction IMP + L-aspartate + GTP = N(6)-(1,2-dicarboxyethyl)-AMP + GDP + phosphate + 2 H(+). It participates in purine metabolism; AMP biosynthesis via de novo pathway; AMP from IMP: step 1/2. Plays an important role in the de novo pathway of purine nucleotide biosynthesis. Catalyzes the first committed step in the biosynthesis of AMP from IMP. The chain is Adenylosuccinate synthetase from Aggregatibacter actinomycetemcomitans (Actinobacillus actinomycetemcomitans).